The chain runs to 464 residues: Cyclin-dependent kinase 8 (464 aa).

The tract at residues M1–R15 is interaction with CCNC. The Protein kinase domain occupies E21–F335. ATP contacts are provided by residues V27 to V35 and K52. D151 functions as the Proton acceptor in the catalytic mechanism. Residues F358–Y464 are disordered. The span at Q373–Q391 shows a compositional bias: low complexity. Composition is skewed to polar residues over residues P409–N426 and P436–Y464.

It belongs to the protein kinase superfamily. CMGC Ser/Thr protein kinase family. CDC2/CDKX subfamily. In terms of assembly, component of the Mediator complex, which is composed of MED1, MED4, MED6, MED7, MED8, MED9, MED10, MED11, MED12, MED13, MED13L, MED14, MED15, MED16, MED17, MED18, MED19, MED20, MED21, MED22, MED23, MED24, MED25, MED26, MED27, MED29, MED30, MED31, CCNC, CDK8 and CDC2L6/CDK11. The MED12, MED13, CCNC and CDK8 subunits form a distinct module termed the CDK8 module. Mediator containing the CDK8 module is less active than Mediator lacking this module in supporting transcriptional activation. Individual preparations of the Mediator complex lacking one or more distinct subunits have been variously termed ARC, CRSP, DRIP, PC2, SMCC and TRAP. The cylin/CDK pair formed by CCNC/CDK8 also associates with the large subunit of RNA polymerase II. Interacts with CTNNB1, GLI3 and MAML1. Mg(2+) serves as cofactor.

Its subcellular location is the nucleus. The catalysed reaction is L-seryl-[protein] + ATP = O-phospho-L-seryl-[protein] + ADP + H(+). The enzyme catalyses L-threonyl-[protein] + ATP = O-phospho-L-threonyl-[protein] + ADP + H(+). It carries out the reaction [DNA-directed RNA polymerase] + ATP = phospho-[DNA-directed RNA polymerase] + ADP + H(+). Component of the Mediator complex, a coactivator involved in regulated gene transcription of nearly all RNA polymerase II-dependent genes. Mediator functions as a bridge to convey information from gene-specific regulatory proteins to the basal RNA polymerase II transcription machinery. Mediator is recruited to promoters by direct interactions with regulatory proteins and serves as a scaffold for the assembly of a functional pre-initiation complex with RNA polymerase II and the general transcription factors. Phosphorylates the CTD (C-terminal domain) of the large subunit of RNA polymerase II (RNAp II), which may inhibit the formation of a transcription initiation complex. Phosphorylates CCNH leading to down-regulation of the TFIIH complex and transcriptional repression. Recruited through interaction with MAML1 to hyperphosphorylate the intracellular domain of NOTCH, leading to its degradation. This is Cyclin-dependent kinase 8 (Cdk8) from Mus musculus (Mouse).